The sequence spans 31 residues: Cliotide T10 (31 aa).

A cross-link (cyclopeptide (Gly-Asn)) is located at residues 1-31 (GIPCGESCVYIPCTVTALLGCSCKDKVCYKN). 3 disulfide bridges follow: cysteine 4–cysteine 21, cysteine 8–cysteine 23, and cysteine 13–cysteine 28.

In terms of processing, contains 3 disulfide bonds. Post-translationally, this is a cyclic peptide. As to expression, expressed in seed, root and nodule but not in flower, stem, shoot, leaf and pod (at protein level).

Functionally, probably participates in a plant defense mechanism. The protein is Cliotide T10 of Clitoria ternatea (Butterfly pea).